Here is an 883-residue protein sequence, read N- to C-terminus: Translation initiation factor IF-2 (883 aa).

2 disordered regions span residues 52 to 102 (KGRD…VNVE) and 115 to 297 (VEAE…PTQP). 2 stretches are compositionally biased toward basic and acidic residues: residues 115–179 (VEAE…REAT) and 204–237 (AAEK…ERAA). Low complexity predominate over residues 239–248 (KTGATAPAAK). Over residues 265–275 (PGRRGGKKGGR) the composition is skewed to basic residues. A compositionally biased stretch (low complexity) spans 276–285 (RAASGGEAAK). Positions 383-550 (PRPPVVTVMG…AILLQAELME (168 aa)) constitute a tr-type G domain. The interval 392-399 (GHVDHGKT) is G1. Residue 392 to 399 (GHVDHGKT) participates in GTP binding. Residues 417 to 421 (GITQH) form a G2 region. The segment at 438-441 (DTPG) is G3. GTP contacts are provided by residues 438–442 (DTPGH) and 492–495 (NKID). The segment at 492–495 (NKID) is G4. A G5 region spans residues 528-530 (SAK).

It belongs to the TRAFAC class translation factor GTPase superfamily. Classic translation factor GTPase family. IF-2 subfamily.

The protein localises to the cytoplasm. One of the essential components for the initiation of protein synthesis. Protects formylmethionyl-tRNA from spontaneous hydrolysis and promotes its binding to the 30S ribosomal subunits. Also involved in the hydrolysis of GTP during the formation of the 70S ribosomal complex. This Alkalilimnicola ehrlichii (strain ATCC BAA-1101 / DSM 17681 / MLHE-1) protein is Translation initiation factor IF-2.